A 408-amino-acid polypeptide reads, in one-letter code: Phosphoglycerate kinase (408 aa).

Substrate contacts are provided by residues 24–26 (DLN), arginine 39, 62–65 (HLGR), arginine 121, and arginine 161. Residues lysine 211, glycine 307, glutamate 338, and 364–367 (GGDS) contribute to the ATP site.

This sequence belongs to the phosphoglycerate kinase family. Monomer.

It localises to the cytoplasm. The enzyme catalyses (2R)-3-phosphoglycerate + ATP = (2R)-3-phospho-glyceroyl phosphate + ADP. Its pathway is carbohydrate degradation; glycolysis; pyruvate from D-glyceraldehyde 3-phosphate: step 2/5. In Paenarthrobacter aurescens (strain TC1), this protein is Phosphoglycerate kinase.